The primary structure comprises 119 residues: MSQEKISEIIKDISALKTSCEKLNSQLDELITQKVENEMLLEEVKVLEDDSVLHKLVGLVLVKEEKSKCYDTISRRLQYITGEIENRKKVITNSEEKLRKLFSDLEAHAGQRKIPVPQA.

It belongs to the prefoldin subunit beta family. Heterohexamer of two PFD-alpha type and four PFD-beta type subunits. May interact with MSP1.

In terms of biological role, binds specifically to cytosolic chaperonin (c-CPN) and transfers target proteins to it. Binds to nascent polypeptide chain and promotes folding in an environment in which there are many competing pathways for nonnative proteins. The chain is Probable prefoldin subunit 6 from Plasmodium falciparum (isolate 3D7).